The following is a 904-amino-acid chain: MICAL-like protein 2 (904 aa).

The Calponin-homology (CH) domain occupies 1–107 (MAAIRALQQW…YVSQYYNYFH (107 aa)). The tract at residues 1–260 (MAAIRALQQW…KLTGLVPRQP (260 aa)) is forms an intramolecular interaction with the C-terminal coiled coil domain keeping the protein in a closed conformation. Phosphoserine is present on residues Ser-110, Ser-143, and Ser-153. The disordered stretch occupies residues 117–178 (GVKRASEDSE…GGPPPKTDQA (62 aa)). The segment covering 143-153 (SPAPARKPPLS) has biased composition (pro residues). An LIM zinc-binding domain is found at 186 to 248 (STCGVCGKHV…TSHLPAAASA (63 aa)). Ser-249 is modified (phosphoserine). The tract at residues 251–722 (KLTGLVPRQP…PANVPALPGE (472 aa)) is disordered. A necessary and sufficient for interaction with actinins region spans residues 261–388 (GAMGVDSRTS…GGAPRVAAPQ (128 aa)). A mediates targeting to the cell plasma membrane region spans residues 261 to 697 (GAMGVDSRTS…EARVQSWKEE (437 aa)). Polar residues predominate over residues 267–277 (SRTSCSPQKAQ). 2 stretches are compositionally biased toward low complexity: residues 293–314 (NSPA…ATSV) and 349–362 (SSAA…ASHP). Residue Ser-294 is modified to Phosphoserine. A compositionally biased stretch (pro residues) spans 363–374 (AVPPSAPDPRPA). The span at 385–400 (AAPQTTLSSSSTSAAT) shows a compositional bias: low complexity. Positions 408 to 433 (PSASRTQQARNKFFQTSAVPPGTSLS) are enriched in polar residues. Positions 459–480 (ALSALEEAGAPAPGRPSPATAA) are enriched in low complexity. A phosphoserine mark is found at Ser-494 and Ser-504. Low complexity-rich tracts occupy residues 520–534 (LSTS…LPPA) and 542–553 (SSGVGRVGAGSR). Residues 564-578 (KSTTLTQDMSTSLQE) are compositionally biased toward polar residues. Positions 593-622 (PVDRRSPAERTLKPKEPRALAEPRAGEAPR) are enriched in basic and acidic residues. Ser-598 carries the phosphoserine modification. The residue at position 644 (Thr-644) is a Phosphothreonine. Positions 647–661 (PASPGPSLPARSPSP) are enriched in pro residues. Phosphoserine is present on residues Ser-649, Ser-658, Ser-660, and Ser-726. Residues 698–807 (EKKPHLQGKP…LMYKSKAQRL (110 aa)) form a forms an intramolecular interaction with the N-terminal Calponin-homology and LIM zinc-binding domains-containing region keeping the protein in a closed conformation region. Residues 723–874 (TVTSPVRLHP…EQEEDQMLRD (152 aa)) form the bMERB domain. Positions 735 to 771 (LSPEEIQRQLQDIERRLDALELRGVELEKRLRAAEGD) form a coiled coil. The tract at residues 807-903 (LEEQQLDIEG…WSPKSKSSPS (97 aa)) is mediates interaction with RAB13 and is required for transition from the closed to the opened conformation.

In terms of assembly, interacts with RAB13 (GTP-bound form); competes with RAB8A and is involved in tight junctions assembly. Interacts with RAB8A; competes with RAB13 and is involved in E-cadherin endocytic recycling. Interacts with RAB8B. Interacts (preferentially in opened conformation) with ACTN1 and ACTN4; stimulated by RAB13 activation. Interacts (via calponin-homology (CH) domain) with the filamins FLNA, FLNB and FLNC (via actin-binding domain).

The protein localises to the cell membrane. It localises to the cell junction. Its subcellular location is the tight junction. The protein resides in the recycling endosome. It is found in the cell projection. The protein localises to the cytoplasm. It localises to the cytoskeleton. Its function is as follows. Effector of small Rab GTPases which is involved in junctional complexes assembly through the regulation of cell adhesion molecules transport to the plasma membrane and actin cytoskeleton reorganization. Regulates the endocytic recycling of occludins, claudins and E-cadherin to the plasma membrane and may thereby regulate the establishment of tight junctions and adherens junctions. In parallel, may regulate actin cytoskeleton reorganization directly through interaction with F-actin or indirectly through actinins and filamins. Most probably involved in the processes of epithelial cell differentiation, cell spreading and neurite outgrowth. Undergoes liquid-liquid phase separation to form tubular recycling endosomes. Plays 2 sequential roles in the biogenesis of tubular recycling endosomes: first organizes phase separation and then the closed form formed by interaction with RAB8A promotes endosomal tubulation. The polypeptide is MICAL-like protein 2 (Homo sapiens (Human)).